A 100-amino-acid chain; its full sequence is Aspartyl/glutamyl-tRNA(Asn/Gln) amidotransferase subunit C (100 aa).

It belongs to the GatC family. As to quaternary structure, heterotrimer of A, B and C subunits.

It carries out the reaction L-glutamyl-tRNA(Gln) + L-glutamine + ATP + H2O = L-glutaminyl-tRNA(Gln) + L-glutamate + ADP + phosphate + H(+). The catalysed reaction is L-aspartyl-tRNA(Asn) + L-glutamine + ATP + H2O = L-asparaginyl-tRNA(Asn) + L-glutamate + ADP + phosphate + 2 H(+). Allows the formation of correctly charged Asn-tRNA(Asn) or Gln-tRNA(Gln) through the transamidation of misacylated Asp-tRNA(Asn) or Glu-tRNA(Gln) in organisms which lack either or both of asparaginyl-tRNA or glutaminyl-tRNA synthetases. The reaction takes place in the presence of glutamine and ATP through an activated phospho-Asp-tRNA(Asn) or phospho-Glu-tRNA(Gln). The protein is Aspartyl/glutamyl-tRNA(Asn/Gln) amidotransferase subunit C of Streptococcus pneumoniae (strain Hungary19A-6).